The sequence spans 373 residues: Anhydro-N-acetylmuramic acid kinase (373 aa).

12-19 contacts ATP; sequence GTSLDGVD.

It belongs to the anhydro-N-acetylmuramic acid kinase family.

It carries out the reaction 1,6-anhydro-N-acetyl-beta-muramate + ATP + H2O = N-acetyl-D-muramate 6-phosphate + ADP + H(+). The protein operates within amino-sugar metabolism; 1,6-anhydro-N-acetylmuramate degradation. It participates in cell wall biogenesis; peptidoglycan recycling. Its function is as follows. Catalyzes the specific phosphorylation of 1,6-anhydro-N-acetylmuramic acid (anhMurNAc) with the simultaneous cleavage of the 1,6-anhydro ring, generating MurNAc-6-P. Is required for the utilization of anhMurNAc either imported from the medium or derived from its own cell wall murein, and thus plays a role in cell wall recycling. The sequence is that of Anhydro-N-acetylmuramic acid kinase from Salmonella dublin (strain CT_02021853).